We begin with the raw amino-acid sequence, 195 residues long: Imidazoleglycerol-phosphate dehydratase (195 aa).

It belongs to the imidazoleglycerol-phosphate dehydratase family.

It localises to the cytoplasm. It carries out the reaction D-erythro-1-(imidazol-4-yl)glycerol 3-phosphate = 3-(imidazol-4-yl)-2-oxopropyl phosphate + H2O. It participates in amino-acid biosynthesis; L-histidine biosynthesis; L-histidine from 5-phospho-alpha-D-ribose 1-diphosphate: step 6/9. This Methylorubrum extorquens (strain CM4 / NCIMB 13688) (Methylobacterium extorquens) protein is Imidazoleglycerol-phosphate dehydratase.